The chain runs to 706 residues: Zinc finger and BTB domain-containing protein 17 (706 aa).

Residues 1-12 (LKSLTVLAESPV) form the BTB domain. The interval 32 to 194 (TAARVTQGDS…LLRSGTYSDR (163 aa)) is disordered. Over residues 67–78 (EPAEQPDAKEGP) the composition is skewed to basic and acidic residues. Positions 90–106 (AAEASPAAVSPSRPQPA) are enriched in low complexity. The segment covering 134–148 (GKEEEGEAMVEDEEE) has biased composition (acidic residues). A compositionally biased stretch (polar residues) spans 170-182 (SGSTDSGQENSGE). 13 consecutive C2H2-type zinc fingers follow at residues 205-227 (HKCE…IRIH), 233-255 (FSCR…EKTH), 261-283 (YGCE…KKRH), 289-311 (YRCD…QLVH), 317-339 (YQCD…LETH), 345-367 (HKCP…LKIH), 373-395 (LKCR…LRIH), 401-423 (YVCV…VPIH), 427-450 (KPCQ…HVRH), 457-479 (YVCE…IRHH), 485-507 (HKCT…IIIH), 513-536 (FLCD…KTVH), and 618-640 (YACD…VRIH). Residues 680–706 (PRDSPQEAPAAPLAPVPLAGEGQAPAE) are disordered. Over residues 687-698 (APAAPLAPVPLA) the composition is skewed to low complexity.

It belongs to the krueppel C2H2-type zinc-finger protein family.

Its subcellular location is the nucleus. Its function is as follows. Transcription factor that can function as an activator or repressor depending on its binding partners, and by targeting negative regulators of cell cycle progression. Plays a critical role in early lymphocyte development, where it is essential to prevent apoptosis in lymphoid precursors, allowing them to survive in response to IL7 and undergo proper lineage commitment. Has been shown to bind to the promoters of adenovirus major late protein and cyclin D1 and activate transcription. Required for early embryonic development during gastrulation. Represses RB1 transcription. The polypeptide is Zinc finger and BTB domain-containing protein 17 (ZBTB17) (Gallus gallus (Chicken)).